Consider the following 347-residue polypeptide: UDP-3-O-acylglucosamine N-acyltransferase (347 aa).

The active-site Proton acceptor is H245.

The protein belongs to the transferase hexapeptide repeat family. LpxD subfamily. As to quaternary structure, homotrimer.

It carries out the reaction a UDP-3-O-[(3R)-3-hydroxyacyl]-alpha-D-glucosamine + a (3R)-hydroxyacyl-[ACP] = a UDP-2-N,3-O-bis[(3R)-3-hydroxyacyl]-alpha-D-glucosamine + holo-[ACP] + H(+). The protein operates within bacterial outer membrane biogenesis; LPS lipid A biosynthesis. Functionally, catalyzes the N-acylation of UDP-3-O-acylglucosamine using 3-hydroxyacyl-ACP as the acyl donor. Is involved in the biosynthesis of lipid A, a phosphorylated glycolipid that anchors the lipopolysaccharide to the outer membrane of the cell. The protein is UDP-3-O-acylglucosamine N-acyltransferase of Chromohalobacter salexigens (strain ATCC BAA-138 / DSM 3043 / CIP 106854 / NCIMB 13768 / 1H11).